The following is a 745-amino-acid chain: Elongation factor G, mitochondrial (745 aa).

Residues 40–317 (ERIRNIGISA…AVLDYLPNPG (278 aa)) enclose the tr-type G domain. Residues 49–56 (AHIDSGKT), 116–120 (DTPGH), and 170–173 (NKLD) each bind GTP.

It belongs to the TRAFAC class translation factor GTPase superfamily. Classic translation factor GTPase family. EF-G/EF-2 subfamily.

Its subcellular location is the mitochondrion. The protein operates within protein biosynthesis; polypeptide chain elongation. In terms of biological role, mitochondrial GTPase that catalyzes the GTP-dependent ribosomal translocation step during translation elongation. During this step, the ribosome changes from the pre-translocational (PRE) to the post-translocational (POST) state as the newly formed A-site-bound peptidyl-tRNA and P-site-bound deacylated tRNA move to the P and E sites, respectively. Catalyzes the coordinated movement of the two tRNA molecules, the mRNA and conformational changes in the ribosome. Essential during development as it acts as a retrograde signal from mitochondria to the nucleus to slow down cell proliferation if mitochondrial energy output is low. This is Elongation factor G, mitochondrial from Drosophila yakuba (Fruit fly).